The primary structure comprises 117 residues: NADH-ubiquinone oxidoreductase chain 3 (117 aa).

A run of 3 helical transmembrane segments spans residues 4–24 (IIIIASVILLITTVVMFLASI), 60–80 (ITIIFLIFDVEIALILPMIII), and 86–106 (IMIWTITSIIFILILLIGLYH).

Belongs to the complex I subunit 3 family.

The protein resides in the mitochondrion membrane. It carries out the reaction a ubiquinone + NADH + 5 H(+)(in) = a ubiquinol + NAD(+) + 4 H(+)(out). Its function is as follows. Core subunit of the mitochondrial membrane respiratory chain NADH dehydrogenase (Complex I) that is believed to belong to the minimal assembly required for catalysis. Complex I functions in the transfer of electrons from NADH to the respiratory chain. The immediate electron acceptor for the enzyme is believed to be ubiquinone. The protein is NADH-ubiquinone oxidoreductase chain 3 (mt:ND3) of Drosophila yakuba (Fruit fly).